The sequence spans 188 residues: Elongation factor P-like protein (188 aa).

This sequence belongs to the elongation factor P family.

The protein is Elongation factor P-like protein of Xanthomonas oryzae pv. oryzae (strain MAFF 311018).